Consider the following 244-residue polypeptide: Acidic leucine-rich nuclear phosphoprotein 32 family member A (244 aa).

4 LRR repeats span residues 18 to 41 (DVKE…TDEF), 43 to 64 (GLEF…PKLN), 65 to 87 (KLKK…AEKC), and 89 to 110 (NLTH…EPLK). Residues 123–161 (CEVTNLNDYRENLFKLLPQLTYLDGYDRDDKEAPDSDAE) form the LRRCT domain. A disordered region spans residues 148 to 244 (YDRDDKEAPD…DQDDEGEDDD (97 aa)). Over residues 157-227 (DSDAEGYVEG…EEDEGDEEAE (71 aa)) the composition is skewed to acidic residues.

The protein belongs to the ANP32 family. In terms of processing, phosphorylated on serine residues.

The protein localises to the nucleus. It is found in the cytoplasm. It localises to the endoplasmic reticulum. In terms of biological role, implicated in a number of cellular processes, including proliferation, differentiation, caspase-dependent and caspase-independent apoptosis, suppression of transformation (tumor suppressor), inhibition of protein phosphatase 2A, regulation of mRNA trafficking and stability, and inhibition of acetyltransferases as part of the INHAT (inhibitor of histone acetyltransferases) complex. The sequence is that of Acidic leucine-rich nuclear phosphoprotein 32 family member A (anp32a) from Xenopus laevis (African clawed frog).